A 322-amino-acid chain; its full sequence is NADH-quinone oxidoreductase subunit H (322 aa).

8 consecutive transmembrane segments (helical) span residues 12-32 (IGKALIVLVGIVGAGAFMSFI), 79-99 (IFVLAPIIAFTAFILAFAVVP), 111-131 (VGLLYILAIAGLAVYAVLFAG), 151-171 (LSYEVFLGLSLMGIVIQTGSF), 183-203 (LWNVIPQILGFITFLFAGVAV), 234-254 (FFVGEYIGIVLISSLIVTLFF), 262-282 (LPPFIWFALKTACFMVFFILL), and 301-321 (VCLPLTLLNMLVTGAVVLMNA).

The protein belongs to the complex I subunit 1 family. As to quaternary structure, NDH-1 is composed of 14 different subunits. Subunits NuoA, H, J, K, L, M, N constitute the membrane sector of the complex.

Its subcellular location is the cell inner membrane. The catalysed reaction is a quinone + NADH + 5 H(+)(in) = a quinol + NAD(+) + 4 H(+)(out). Functionally, NDH-1 shuttles electrons from NADH, via FMN and iron-sulfur (Fe-S) centers, to quinones in the respiratory chain. The immediate electron acceptor for the enzyme in this species is believed to be ubiquinone. Couples the redox reaction to proton translocation (for every two electrons transferred, four hydrogen ions are translocated across the cytoplasmic membrane), and thus conserves the redox energy in a proton gradient. This subunit may bind ubiquinone. In Aeromonas hydrophila subsp. hydrophila (strain ATCC 7966 / DSM 30187 / BCRC 13018 / CCUG 14551 / JCM 1027 / KCTC 2358 / NCIMB 9240 / NCTC 8049), this protein is NADH-quinone oxidoreductase subunit H.